The following is a 101-amino-acid chain: NAD(P)H-quinone oxidoreductase subunit 4L, chloroplastic (101 aa).

3 consecutive transmembrane segments (helical) span residues 2-22, 32-52, and 61-81; these read MLEYVLGLSAYLFSIGIYGLI, MCLELILNAVNINFVTFSDFF, and IFSIFVISIAAAEAAIGPAIV.

This sequence belongs to the complex I subunit 4L family. As to quaternary structure, NDH is composed of at least 16 different subunits, 5 of which are encoded in the nucleus.

It is found in the plastid. It localises to the chloroplast thylakoid membrane. The enzyme catalyses a plastoquinone + NADH + (n+1) H(+)(in) = a plastoquinol + NAD(+) + n H(+)(out). It carries out the reaction a plastoquinone + NADPH + (n+1) H(+)(in) = a plastoquinol + NADP(+) + n H(+)(out). Its function is as follows. NDH shuttles electrons from NAD(P)H:plastoquinone, via FMN and iron-sulfur (Fe-S) centers, to quinones in the photosynthetic chain and possibly in a chloroplast respiratory chain. The immediate electron acceptor for the enzyme in this species is believed to be plastoquinone. Couples the redox reaction to proton translocation, and thus conserves the redox energy in a proton gradient. This is NAD(P)H-quinone oxidoreductase subunit 4L, chloroplastic from Populus trichocarpa (Western balsam poplar).